A 329-amino-acid chain; its full sequence is Signal recognition particle receptor FtsY (329 aa).

GTP-binding positions include 127 to 134 (GVNGVGKT), 209 to 213 (DTAGR), and 273 to 276 (TKLD).

This sequence belongs to the GTP-binding SRP family. FtsY subfamily. In terms of assembly, part of the signal recognition particle protein translocation system, which is composed of SRP and FtsY.

The protein resides in the cell membrane. Its subcellular location is the cytoplasm. The enzyme catalyses GTP + H2O = GDP + phosphate + H(+). In terms of biological role, involved in targeting and insertion of nascent membrane proteins into the cytoplasmic membrane. Acts as a receptor for the complex formed by the signal recognition particle (SRP) and the ribosome-nascent chain (RNC). This is Signal recognition particle receptor FtsY from Bacillus subtilis (strain 168).